A 206-amino-acid chain; its full sequence is uncharacterized protein (206 aa).

Residues 1 to 18 (MSSLVLIPCALLTQGIYA) form the signal peptide.

This is an uncharacterized protein from Acanthamoeba polyphaga mimivirus (APMV).